A 278-amino-acid chain; its full sequence is Probable ribosomal RNA small subunit methyltransferase A (278 aa).

Residues Asn-23, Leu-25, Gly-50, Glu-71, Asp-95, and Asn-110 each contribute to the S-adenosyl-L-methionine site.

It belongs to the class I-like SAM-binding methyltransferase superfamily. rRNA adenine N(6)-methyltransferase family. RsmA subfamily.

It is found in the cytoplasm. In terms of biological role, specifically dimethylates two adjacent adenosines in the loop of a conserved hairpin near the 3'-end of 16S rRNA in the 30S particle. May play a critical role in biogenesis of 30S subunits. The chain is Probable ribosomal RNA small subunit methyltransferase A from Thermococcus gammatolerans (strain DSM 15229 / JCM 11827 / EJ3).